The primary structure comprises 162 residues: Peptidyl-prolyl cis-trans isomerase-like 1 (162 aa).

Positions 1–155 (MATDVTFDTS…DEVKILRAKV (155 aa)) constitute a PPIase cyclophilin-type domain.

This sequence belongs to the cyclophilin-type PPIase family. PPIL1 subfamily.

It carries out the reaction [protein]-peptidylproline (omega=180) = [protein]-peptidylproline (omega=0). Functionally, PPIases accelerate the folding of proteins. It catalyzes the cis-trans isomerization of proline imidic peptide bonds in oligopeptides. This is Peptidyl-prolyl cis-trans isomerase-like 1 (cyp1) from Emericella nidulans (strain FGSC A4 / ATCC 38163 / CBS 112.46 / NRRL 194 / M139) (Aspergillus nidulans).